A 143-amino-acid polypeptide reads, in one-letter code: MQETECCGVLSYIVGSVFLCVFMLLCGYFLGGRSYSRFKNVPFESGIKSVGDARARFSVKFYLIAMIFVIFDVEGIYLYIWSVSIQETGWIGFIEVCIFVFILLISLIYATYVGVFNWKNRLNEYSRVDSLYIGRSKFFKNDK.

Transmembrane regions (helical) follow at residues 12 to 32 (YIVGSVFLCVFMLLCGYFLGG), 61 to 81 (FYLIAMIFVIFDVEGIYLYIW), and 90 to 110 (WIGFIEVCIFVFILLISLIYA).

The protein belongs to the complex I subunit 3 family. As to quaternary structure, NDH-1 is composed of 13 different subunits. Subunits NuoA, H, J, K, L, M, N constitute the membrane sector of the complex.

The protein localises to the cell inner membrane. It carries out the reaction a quinone + NADH + 5 H(+)(in) = a quinol + NAD(+) + 4 H(+)(out). Its function is as follows. NDH-1 shuttles electrons from NADH, via FMN and iron-sulfur (Fe-S) centers, to quinones in the respiratory chain. The immediate electron acceptor for the enzyme in this species is believed to be ubiquinone. Couples the redox reaction to proton translocation (for every two electrons transferred, four hydrogen ions are translocated across the cytoplasmic membrane), and thus conserves the redox energy in a proton gradient. This chain is NADH-quinone oxidoreductase subunit A, found in Blochmanniella floridana.